The chain runs to 467 residues: Glutamate--tRNA ligase (467 aa).

The 'HIGH' region signature appears at 9–19 (PSPTGYLHIGG). A 'KMSKS' region motif is present at residues 237-241 (KLSKR). K240 provides a ligand contact to ATP.

It belongs to the class-I aminoacyl-tRNA synthetase family. Glutamate--tRNA ligase type 1 subfamily. As to quaternary structure, monomer.

It localises to the cytoplasm. It catalyses the reaction tRNA(Glu) + L-glutamate + ATP = L-glutamyl-tRNA(Glu) + AMP + diphosphate. Catalyzes the attachment of glutamate to tRNA(Glu) in a two-step reaction: glutamate is first activated by ATP to form Glu-AMP and then transferred to the acceptor end of tRNA(Glu). In Xylella fastidiosa (strain M23), this protein is Glutamate--tRNA ligase.